We begin with the raw amino-acid sequence, 260 residues long: MSSSQSGVCPCQGSASHPTILYTLLSPGPRTRPMAPASRSHCLCQQHRPVRLCAPHRTCREALDVLGKTVAFLRNLPSFCLLPHEDQRRLLEGCWGPLFLLGLAQDTVTFEVAEAPVPSILKKILLEEPNSGAQGAQPPDPPQPSLAAVQWLQHCLESFWSLELGPKEYAYLKGTILFNPDVPGLHASCHIAHLQQEAHWALCEVLEPWYPASQGRLARILLMASTLKNISCTLLVDLFFRPVIGDVDITELLEDMLLLR.

An NR LBD domain is found at 16–260; that stretch reads SHPTILYTLL…ELLEDMLLLR (245 aa). Arg57 bears the Symmetric dimethylarginine; by PRMT5 mark.

It belongs to the nuclear hormone receptor family. NR0 subfamily. As to quaternary structure, heterodimer; efficient DNA binding requires dimerization with another bHLH protein. Interacts (via N-terminus) with NEUROD1 (via N-terminus and C-terminus). Interacts with ID2. Interacts with NR1I3 and EID1. Interacts with RARA, RXRA, THRB, NR5A1, NR5A2, PPARA and PPARG. Interacts with RORG, NFIL3, NR1D1 and BHLHE41. Interacts with HNF4A; the resulting heterodimer is transcriptionally inactive. Interacts with DDX3X; this interaction disrupts the interaction between HNF4 and NR0B2/SHP that forms inactive heterodimers and enhances the formation of active HNF4 homodimers. Arginine methylation by PRMT5 enhances repression activity of metabolic genes in liver in response to bile acid signaling, by increasing interaction with cofactors. Detected in kidney, testis, heart and liver.

It is found in the cytoplasm. The protein resides in the nucleus. In terms of biological role, transcriptional regulator that acts as a negative regulator of receptor-dependent signaling pathways. Specifically inhibits transactivation of the nuclear receptor with which it interacts. Inhibits transcriptional activity of NEUROD1 on E-box-containing promoter by interfering with the coactivation function of the p300/CBP-mediated transcription complex for NEUROD1. Essential component of the liver circadian clock which via its interaction with NR1D1 and RORG regulates NPAS2-mediated hepatic lipid metabolism. Regulates the circadian expression of cytochrome P450 (CYP) enzymes. Represses: NR5A2 and HNF4A to down-regulate CYP2C38, NFLI3 to up-regulate CYP2A5, BHLHE41/HNF1A axis to up-regulate CYP1A2, CYP2E1 and CYP3A11, and NR1D1 to up-regulate CYP2B10, CYP4A10 and CYP4A14. The polypeptide is Nuclear receptor subfamily 0 group B member 2 (Nr0b2) (Rattus norvegicus (Rat)).